We begin with the raw amino-acid sequence, 576 residues long: Ferroportin (576 aa).

Residues 1-23 are Cytoplasmic-facing; the sequence is MPKAGEQARQGGCCGSLANYLTS. Residues 24-53 traverse the membrane as a helical segment; that stretch reads AKFLLYLGHSLSTWGDRMWHFAVSVFLVEL. Fe cation-binding residues include aspartate 39 and histidine 43. Residues 54–57 are Extracellular-facing; it reads YGNS. A helical membrane pass occupies residues 58 to 84; sequence LLLTAVYGLVVAGSVLVLGAIIGDWVD. Residues 85-87 are Cytoplasmic-facing; that stretch reads KNA. The chain crosses the membrane as a helical span at residues 88–118; sequence RLKVAQTSLVVQNVSVILCGIILMMVFLHKN. Residues 119 to 126 lie on the Extracellular side of the membrane; sequence ELLTMYHG. Residues 127 to 162 traverse the membrane as a helical segment; the sequence is WVLTFCYILIITIADVANLASTATAITIQRDWIVVV. Topologically, residues 163-164 are cytoplasmic; sequence AG. A helical membrane pass occupies residues 165 to 195; the sequence is GDRSKLADMNATIRRIDQLTNILAPMAVGQI. Over 196–202 the chain is Extracellular; the sequence is MTFGSAV. The chain crosses the membrane as a helical span at residues 203-229; the sequence is IGCGFISGWNLVSMCVEYFLLWKVYQK. Over 230–306 the chain is Cytoplasmic; the sequence is TPALAVKAAL…DGWVSYYNQS (77 aa). Residues 307–333 traverse the membrane as a helical segment; it reads VFLAGMGLAFLYMTVLGFDCITTGYAY. Fe cation is bound at residue cysteine 326. Topologically, residues 334–338 are extracellular; it reads TQGLS. A helical transmembrane segment spans residues 339–366; the sequence is GSILSILMGASAITGIMGTVAFTWLRRK. The Cytoplasmic portion of the chain corresponds to 367-368; that stretch reads CG. Residues 369-391 form a helical membrane-spanning segment; the sequence is LVRTGLISGFAQLSCLILCVISV. At 392–458 the chain is on the extracellular side; sequence FMPGSPLDLS…ETTPKSVPII (67 aa). Residue asparagine 439 is glycosylated (N-linked (GlcNAc...) asparagine). The helical transmembrane segment at 459–488 threads the bilayer; that stretch reads SVSLLFAGVIAARIGLWSFDLTVTQLLQEN. Residues 489 to 493 lie on the Cytoplasmic side of the membrane; that stretch reads VIESE. Residues 494–518 form a helical membrane-spanning segment; it reads RGIINGVQNSMNYLLDLLHFIMVIL. Histidine 512 contacts Fe cation. Residues 519-521 are Extracellular-facing; the sequence is APN. A helical transmembrane segment spans residues 522-547; sequence PEAFGLLVLISVSFVAMGHIMYFRFA. The Cytoplasmic portion of the chain corresponds to 548–576; it reads QKTLGSKLFACGADDEEVTNENQANTSVV.

It belongs to the ferroportin (FP) (TC 2.A.100) family. SLC40A subfamily. Identified in a complex with STOM. Interacts with HAMP; affinity of the peptide hormone HAMP for SLC40A1 increases by 80-fold in the presence of iron and the interaction promotes SLC40A1 ubiquitination and degradation. Part of a complex composed of SLC40A1/ferroportin, TF/transferrin and HEPH/hephaestin that transfers iron from cells to transferrin. Post-translationally, polyubiquitinated by RNF217; leading to proteasomal degradation. Under conditions of high systemic iron levels, both the hormone peptide hepcidin/HAMP and holo(iron bound)-transferrin/TF induce the ubiquitination, internalization and proteasomal degradation of SLC40A1 to control iron release from cells.

The protein resides in the cell membrane. It localises to the basolateral cell membrane. It carries out the reaction Fe(2+)(in) = Fe(2+)(out). During elevated serum iron levels, liver-derived hepcidin/HAMP negatively regulates cell surface ferroportin/SLC40A1 by inducing its ubiquitination, internalization, and degradation. Indeed, hepcidin/HAMP affinity towards ferroportin/SLC40A1 increases by 80-fold in the presence of iron. Functionally, transports Fe(2+) from the inside of a cell to the outside of the cell, playing a key role for maintaining systemic iron homeostasis. Transports iron from intestinal, splenic, hepatic cells, macrophages and erythrocytes into the blood to provide iron to other tissues. Controls therefore dietary iron uptake, iron recycling by macrophages and erythrocytes, and release of iron stores in hepatocytes. When iron is in excess in serum, circulating HAMP/hepcidin levels increase resulting in a degradation of SLC40A1, thus limiting the iron efflux to plasma. This is Ferroportin from Canis lupus familiaris (Dog).